The following is a 379-amino-acid chain: Nitric oxide reductase FlRd-NAD(+) reductase (379 aa).

The protein belongs to the FAD-dependent oxidoreductase family. The cofactor is FAD.

The protein localises to the cytoplasm. The enzyme catalyses 2 reduced [nitric oxide reductase rubredoxin domain] + NAD(+) + H(+) = 2 oxidized [nitric oxide reductase rubredoxin domain] + NADH. The protein operates within nitrogen metabolism; nitric oxide reduction. Functionally, one of at least two accessory proteins for anaerobic nitric oxide (NO) reductase. Reduces the rubredoxin moiety of NO reductase. This chain is Nitric oxide reductase FlRd-NAD(+) reductase, found in Pectobacterium atrosepticum (strain SCRI 1043 / ATCC BAA-672) (Erwinia carotovora subsp. atroseptica).